The following is a 728-amino-acid chain: Phosphoribosylformylglycinamidine synthase subunit PurL (728 aa).

Histidine 42 is an active-site residue. Tyrosine 45 and lysine 84 together coordinate ATP. Glutamate 86 is a Mg(2+) binding site. Residues 87–90 (SHNH) and arginine 109 contribute to the substrate site. The active-site Proton acceptor is histidine 88. Mg(2+) is bound at residue aspartate 110. Substrate is bound at residue glutamine 237. Mg(2+) is bound at residue aspartate 265. 309 to 311 (ESQ) contacts substrate. Aspartate 491 and glycine 528 together coordinate ATP. Asparagine 529 contacts Mg(2+). Serine 531 contributes to the substrate binding site.

This sequence belongs to the FGAMS family. Monomer. Part of the FGAM synthase complex composed of 1 PurL, 1 PurQ and 2 PurS subunits.

It is found in the cytoplasm. The enzyme catalyses N(2)-formyl-N(1)-(5-phospho-beta-D-ribosyl)glycinamide + L-glutamine + ATP + H2O = 2-formamido-N(1)-(5-O-phospho-beta-D-ribosyl)acetamidine + L-glutamate + ADP + phosphate + H(+). The protein operates within purine metabolism; IMP biosynthesis via de novo pathway; 5-amino-1-(5-phospho-D-ribosyl)imidazole from N(2)-formyl-N(1)-(5-phospho-D-ribosyl)glycinamide: step 1/2. In terms of biological role, part of the phosphoribosylformylglycinamidine synthase complex involved in the purines biosynthetic pathway. Catalyzes the ATP-dependent conversion of formylglycinamide ribonucleotide (FGAR) and glutamine to yield formylglycinamidine ribonucleotide (FGAM) and glutamate. The FGAM synthase complex is composed of three subunits. PurQ produces an ammonia molecule by converting glutamine to glutamate. PurL transfers the ammonia molecule to FGAR to form FGAM in an ATP-dependent manner. PurS interacts with PurQ and PurL and is thought to assist in the transfer of the ammonia molecule from PurQ to PurL. In Campylobacter jejuni subsp. jejuni serotype O:2 (strain ATCC 700819 / NCTC 11168), this protein is Phosphoribosylformylglycinamidine synthase subunit PurL.